The primary structure comprises 56 residues: UPF0434 protein Ecaj_0131 (56 aa).

The protein belongs to the UPF0434 family.

This is UPF0434 protein Ecaj_0131 from Ehrlichia canis (strain Jake).